We begin with the raw amino-acid sequence, 303 residues long: 1D-myo-inositol 2-acetamido-2-deoxy-alpha-D-glucopyranoside deacetylase 1 (303 aa).

Residues His-15, Asp-18, and His-157 each coordinate Zn(2+).

It belongs to the MshB deacetylase family. It depends on Zn(2+) as a cofactor.

The catalysed reaction is 1D-myo-inositol 2-acetamido-2-deoxy-alpha-D-glucopyranoside + H2O = 1D-myo-inositol 2-amino-2-deoxy-alpha-D-glucopyranoside + acetate. In terms of biological role, catalyzes the deacetylation of 1D-myo-inositol 2-acetamido-2-deoxy-alpha-D-glucopyranoside (GlcNAc-Ins) in the mycothiol biosynthesis pathway. This chain is 1D-myo-inositol 2-acetamido-2-deoxy-alpha-D-glucopyranoside deacetylase 1, found in Saccharopolyspora erythraea (strain ATCC 11635 / DSM 40517 / JCM 4748 / NBRC 13426 / NCIMB 8594 / NRRL 2338).